Reading from the N-terminus, the 449-residue chain is Histidinol dehydrogenase (449 aa).

Residues Tyr135, Gln199, and Asn229 each coordinate NAD(+). Thr252, Gln274, and His277 together coordinate substrate. Zn(2+) is bound by residues Gln274 and His277. Active-site proton acceptor residues include Glu343 and His344. Substrate-binding residues include His344, Asp377, Glu431, and His436. Asp377 provides a ligand contact to Zn(2+). His436 is a binding site for Zn(2+).

The protein belongs to the histidinol dehydrogenase family. Zn(2+) serves as cofactor.

The catalysed reaction is L-histidinol + 2 NAD(+) + H2O = L-histidine + 2 NADH + 3 H(+). The protein operates within amino-acid biosynthesis; L-histidine biosynthesis; L-histidine from 5-phospho-alpha-D-ribose 1-diphosphate: step 9/9. Its function is as follows. Catalyzes the sequential NAD-dependent oxidations of L-histidinol to L-histidinaldehyde and then to L-histidine. This chain is Histidinol dehydrogenase, found in Corynebacterium diphtheriae (strain ATCC 700971 / NCTC 13129 / Biotype gravis).